Here is a 454-residue protein sequence, read N- to C-terminus: L-serine dehydratase 1 (454 aa).

The protein belongs to the iron-sulfur dependent L-serine dehydratase family. Requires [4Fe-4S] cluster as cofactor. Activated by post-translational modification by a system involving at least three gene products. Activation is mimicked in vitro by iron and dithiothreitol. There is considerable evidence for a free-radical activation mechanism.

It catalyses the reaction L-serine = pyruvate + NH4(+). It functions in the pathway carbohydrate biosynthesis; gluconeogenesis. Also deaminates threonine, particularly when it is present in high concentration. The chain is L-serine dehydratase 1 (sdaA) from Escherichia coli (strain K12).